Consider the following 272-residue polypeptide: Rhamnulose-1-phosphate aldolase (272 aa).

Residue Glu117 is part of the active site. 3 residues coordinate Zn(2+): His141, His143, and His212.

Belongs to the aldolase class II family. RhaD subfamily. Zn(2+) serves as cofactor.

It localises to the cytoplasm. It carries out the reaction L-rhamnulose 1-phosphate = (S)-lactaldehyde + dihydroxyacetone phosphate. Its pathway is carbohydrate degradation; L-rhamnose degradation; glycerone phosphate from L-rhamnose: step 3/3. Functionally, catalyzes the reversible cleavage of L-rhamnulose-1-phosphate to dihydroxyacetone phosphate (DHAP) and L-lactaldehyde. The protein is Rhamnulose-1-phosphate aldolase of Mannheimia succiniciproducens (strain KCTC 0769BP / MBEL55E).